The chain runs to 304 residues: UPF0282 protein TSIB_1029 (304 aa).

The protein belongs to the UPF0282 family.

This is UPF0282 protein TSIB_1029 from Thermococcus sibiricus (strain DSM 12597 / MM 739).